Consider the following 330-residue polypeptide: Biotin synthase 2 (330 aa).

Positions 48-278 (MCGDGFDMCS…QAAIRLAGGR (231 aa)) constitute a Radical SAM core domain. The [4Fe-4S] cluster site is built by C66, C70, and C73. Positions 111, 143, 203, and 273 each coordinate [2Fe-2S] cluster.

This sequence belongs to the radical SAM superfamily. Biotin synthase family. As to quaternary structure, homodimer. The cofactor is [4Fe-4S] cluster. It depends on [2Fe-2S] cluster as a cofactor.

It catalyses the reaction (4R,5S)-dethiobiotin + (sulfur carrier)-SH + 2 reduced [2Fe-2S]-[ferredoxin] + 2 S-adenosyl-L-methionine = (sulfur carrier)-H + biotin + 2 5'-deoxyadenosine + 2 L-methionine + 2 oxidized [2Fe-2S]-[ferredoxin]. It functions in the pathway cofactor biosynthesis; biotin biosynthesis; biotin from 7,8-diaminononanoate: step 2/2. Catalyzes the conversion of dethiobiotin (DTB) to biotin by the insertion of a sulfur atom into dethiobiotin via a radical-based mechanism. The sequence is that of Biotin synthase 2 from Corynebacterium diphtheriae (strain ATCC 700971 / NCTC 13129 / Biotype gravis).